Reading from the N-terminus, the 333-residue chain is Cinnamoyl-CoA reductase 1 (333 aa).

Residues 13–19, arginine 38, lysine 44, 64–65, 84–86, tyrosine 157, lysine 161, 184–187, and serine 199 contribute to the NADP(+) site; these read GAGGFIA, DL, TAS, and PVLV. Cysteine 150 and cysteine 158 are joined by a disulfide. The Proton donor role is filled by lysine 161.

It belongs to the NAD(P)-dependent epimerase/dehydratase family. Dihydroflavonol-4-reductase subfamily. In terms of processing, the formation of a reversible disulfide bond reduces activity by perturbing the positioning of nearby catalytic residues. In terms of tissue distribution, expressed in flowers, leaves and stems.

The protein resides in the cytoplasm. It carries out the reaction (E)-coniferaldehyde + NADP(+) + CoA = (E)-feruloyl-CoA + NADPH + H(+). The enzyme catalyses (E)-4-coumaraldehyde + NADP(+) + CoA = (E)-4-coumaroyl-CoA + NADPH + H(+). It catalyses the reaction (E)-sinapaldehyde + NADP(+) + CoA = (E)-sinapoyl-CoA + NADPH + H(+). The catalysed reaction is (E)-cinnamaldehyde + NADP(+) + CoA = (E)-cinnamoyl-CoA + NADPH + H(+). The protein operates within aromatic compound metabolism; phenylpropanoid biosynthesis. Its activity is regulated as follows. Inhibited by sodium iodide-mediated oxidation. Involved in the latter stages of lignin biosynthesis. Catalyzes one of the last steps of monolignol biosynthesis, the conversion of cinnamoyl-CoAs into their corresponding cinnamaldehydes. Mediates the conversion of feruloyl CoA to coniferylaldehyde. Also active toward p-coumaroyl-CoA and sinapoyl-CoA. Involved in the production of floral volatile phenylpropanoids in flowers of fragrant cultivars (e.g. cv. Mitchell and cv. V26) from cinnamic acid, a common precursor with the anthocyanin biosynthesis pathway involved in flower pigmentation. The sequence is that of Cinnamoyl-CoA reductase 1 from Petunia hybrida (Petunia).